A 739-amino-acid chain; its full sequence is Catalase-peroxidase (739 aa).

The N-terminal stretch at 1–23 (MLKKIVTALGMSGMLLASNSAIA) is a signal peptide. The segment at residues 100–221 (WHDAGTYRIY…YAATQMGLIY (122 aa)) is a cross-link (tryptophyl-tyrosyl-methioninium (Trp-Tyr) (with M-247)). The active-site Proton acceptor is the H101. Residues 221-247 (YVNPEGPDGKPDIKGAASEIRQAFRAM) constitute a cross-link (tryptophyl-tyrosyl-methioninium (Tyr-Met) (with W-100)). Residue H262 participates in heme b binding.

The protein belongs to the peroxidase family. Peroxidase/catalase subfamily. Homodimer or homotetramer. It depends on heme b as a cofactor. Post-translationally, formation of the three residue Trp-Tyr-Met cross-link is important for the catalase, but not the peroxidase activity of the enzyme.

The enzyme catalyses H2O2 + AH2 = A + 2 H2O. It catalyses the reaction 2 H2O2 = O2 + 2 H2O. Bifunctional enzyme with both catalase and broad-spectrum peroxidase activity. This chain is Catalase-peroxidase, found in Francisella tularensis subsp. novicida (strain U112).